Consider the following 835-residue polypeptide: Cell division control protein 48 (835 aa).

The segment at 1–21 is disordered; sequence MGEEHKPLLDASGVDPREEDK. ATP is bound at residue 257 to 263; the sequence is PGTGKTL. Residues Lys305, Lys322, and Lys346 each participate in a glycyl lysine isopeptide (Lys-Gly) (interchain with G-Cter in ubiquitin) cross-link. 2 residues coordinate ATP: Asn358 and His394. Phosphoserine is present on residues Ser472 and Ser519. Lys522 is covalently cross-linked (Glycyl lysine isopeptide (Lys-Gly) (interchain with G-Cter in ubiquitin)). 531–536 serves as a coordination point for ATP; the sequence is GTGKTL. Residues Lys539, Lys594, and Lys673 each participate in a glycyl lysine isopeptide (Lys-Gly) (interchain with G-Cter in ubiquitin) cross-link. Residues 720 to 729 are compositionally biased toward basic and acidic residues; the sequence is EAEKEVKVEG. Residues 720 to 746 form a disordered region; the sequence is EAEKEVKVEGEDVEMTDEGAKAEQEPE. Thr735 carries the phosphothreonine modification. Ser770 bears the Phosphoserine mark. A disordered region spans residues 792–835; sequence SNFNFNDAPLGTTATDNANSNNSAPSGAGAAFGSNAEEDDDLYS. Residues 802–826 show a composition bias toward low complexity; the sequence is GTTATDNANSNNSAPSGAGAAFGSN.

The protein belongs to the AAA ATPase family. Component of the heterotrimeric CDC48-NPL4-UFD1 ATPase complex. The CDC48-NPL4-UFD1 ATPase complex interacts with the HRD1 ubiquitin ligase complex composed of the E3 ligase HRD1, its cofactors HRD3, USA1 and DER1, substrate recruiting factor YOS9 and CDC48-binding protein UBX2. Interaction between the complexes is mediated by interaction between CDC48-NPL4-UFD1 complex member CDC48 and HRD1 complex member UBX2. Forms a complex composed of CDC48, NPL4, UFD1, UFD2 and SHP1. Forms a complex composed of CDC48, NPL4, UFD1, DOA1, SHP1 and deubiquitinase OTU1; within the complex interacts with DOA1/UFD3 and OTU1 to prevent multiubiquitination of substrates. Interacts with UFD2, to add further ubiquitin moieties; the interaction with UFD2 is prevented by DOA1/UFD3. Forms a complex composed of CDC48, DOA1, deubiquitinase UBP3 and probably BRE5; within the complex interacts with DOA1 and UBP3. Interacts (via C-terminus) with DOA1 (via PUL domain); the interaction is direct. Interacts with NPL4. Interacts with SHP1/UBX1, UBX2, UBX3, UBX4, UBX5, UBX6 and UBX7. Interacts with VMS1; the interaction recruits CDC48 to the mitochondria in response to mitochondrial stress. Component of the ribosome quality control complex (RQC), composed of the E3 ubiquitin ligase RKR1/LTN1, RQC1 and RQC2, as well as CDC48 and its ubiquitin-binding cofactors. RQC forms a stable complex with 60S ribosomal subunits. Interacts with ASE1 and CDC5; the interaction is likely to result in their degradation. Component of the DSCc E3 ligase complexes composed of at least TUL1, DSC2, DSC3, UBX3, CDC48 as well as VLD1 for the vacuole-localized complex or GLD1 for the Golgi/endosome-localized complex.

The protein resides in the microsome. The protein localises to the endoplasmic reticulum. It localises to the cytoplasm. It carries out the reaction ATP + H2O = ADP + phosphate + H(+). The first ATP-binding region has low ATPase activity. The second ATP-binding region is responsible for ATPase activity. ATP binding to the first ATP-binding region induces intrinsic activity of the second ATP-binding region. While ATP binding to the first ATP-binding region appears to prevent ATP hydrolysis by the second ATP-binding region, ADP-binding to first region promotes the coordinate and cooperative ATPase cycle of the second ATP-binding region. ATP binding to the first ATP-binding region induces a conformational change, promoting the rotation of the first ATP-binding region relative to the second ATP-binding region in the hexamer. Functionally, ATP-dependent chaperone which probably uses the energy provided by ATP hydrolysis to generate mechanical force to unfold substrate proteins, disassemble protein complexes, and disaggregate protein aggregates. By recruiting and promoting the degradation of ubiquitinated proteins, plays a role in the ubiquitin fusion degradation (UFD) pathway. Has a role in the endoplasmic reticulum-associated degradation (ERAD) pathway which mediates the cytoplasmic elimination of misfolded proteins exported from the ER. Required for the proteasome-dependent processing/activation of MGA2 and SPT23 transcription factors leading to the subsequent expression of OLE1. Has an additional role in the turnover of OLE1 where it targets ubiquitinated OLE1 and other proteins to the ERAD. Regulates ubiquitin-mediated mitochondria protein degradation. Involved in spindle disassembly probably by promoting the degradation of spindle assembly factors ASE1 and CDC5 at the end of mitosis. Component of the ribosome quality control complex (RQC), a ribosome-associated complex that mediates ubiquitination and extraction of incompletely synthesized nascent chains for proteasomal degradation. CDC48 may provide the mechanical force that dislodges the polyubiquitinated nascent peptides from the exit channel. Required for ribophagy, a process which relocalizes ribosomal particles into the vacuole for degradation in response to starvation. Component of the DSC E3 ubiquitin ligase complexes that tag proteins present in Golgi, endosome and vacuole membranes and function in protein homeostasis under non-stress conditions and support a role in protein quality control. Substrate initially binds through the attached polyubiquitin chain to UDF1/NPL4 and then moves through the pore of the ATPase rings and is thereby unfolded. Acts on a broad range of even well-folded proteins via ubiquitin-binding and unfolding to initiate substrate processing. Involved in degradation of mislocalized tail-anchored transmembrane proteins extracted from the mitochondrion outer membrane by MSP1 and ubiquitinated by DOA10. The chain is Cell division control protein 48 from Saccharomyces cerevisiae (strain ATCC 204508 / S288c) (Baker's yeast).